A 560-amino-acid polypeptide reads, in one-letter code: Factor VII-activating protease (560 aa).

An N-terminal signal peptide occupies residues 1-23 (MFARMSDLHVLLLMALVGKTACG). N-linked (GlcNAc...) asparagine glycosylation is present at N54. 3 EGF-like domains span residues 73–109 (QADP…NKCQ), 111–148 (VQNT…PSCS), and 150–188 (VVPV…KFCE). 18 disulfide bridges follow: C77–C88, C82–C97, C99–C108, C115–C125, C120–C136, C138–C147, C154–C165, C159–C176, C178–C187, C194–C276, C215–C257, C246–C271, C301–C435, C347–C363, C355–C424, C447–C515, C477–C493, and C505–C533. The 84-residue stretch at 193–276 (DCYVGDGYSY…KWEYCDVSAC (84 aa)) folds into the Kringle domain. N207 carries an N-linked (GlcNAc...) asparagine glycan. One can recognise a Peptidase S1 domain in the interval 314-555 (IYGGFKSTAG…FLNWIKATIK (242 aa)). Active-site charge relay system residues include H362 and D411. S509 functions as the Charge relay system in the catalytic mechanism.

It belongs to the peptidase S1 family. In terms of assembly, heterodimer; disulfide-linked. Heterodimer of a 50 kDa heavy and a 27 kDa light chain linked by a disulfide bond. Post-translationally, proteolytic cleavage at Gly-23 or Met-27 can give rise to the 50 kDa heavy chain (HC) and cleavage at Arg-313 or Lys-319 can give rise to the 27 kDa light chain (LC). The HC can undergo further proteolytic cleavage giving rise to a 26 kDa fragment. The LC can undergo further proteolytic cleavage at Arg-313 leading to a 17-kDa fragment and at Arg-480 leading to a 8-kDa fragment. In terms of tissue distribution, ubiquitously expressed.

The protein localises to the secreted. Functionally, cleaves the alpha-chain at multiple sites and the beta-chain between 'Lys-53' and 'Lys-54' but not the gamma-chain of fibrinogen and therefore does not initiate the formation of the fibrin clot and does not cause the fibrinolysis directly. It does not cleave (activate) prothrombin and plasminogen but converts the inactive single chain urinary plasminogen activator (pro-urokinase) to the active two chain form. Activates coagulation factor VII. May function as a tumor suppressor negatively regulating cell proliferation and cell migration. This chain is Factor VII-activating protease, found in Homo sapiens (Human).